The following is a 228-amino-acid chain: ATP-dependent dethiobiotin synthetase BioD (228 aa).

ATP is bound at residue 12 to 17; it reads DVGKTY. Residue Thr16 coordinates Mg(2+). Lys37 is a catalytic residue. ATP is bound by residues Asp53, 114-117, 174-175, 203-205, and Asn210; these read EGMG, ND, and PFI. Residues Asp53 and Glu114 each contribute to the Mg(2+) site.

Belongs to the dethiobiotin synthetase family. In terms of assembly, homodimer. Requires Mg(2+) as cofactor.

The protein resides in the cytoplasm. It catalyses the reaction (7R,8S)-7,8-diammoniononanoate + CO2 + ATP = (4R,5S)-dethiobiotin + ADP + phosphate + 3 H(+). The protein operates within cofactor biosynthesis; biotin biosynthesis; biotin from 7,8-diaminononanoate: step 1/2. In terms of biological role, catalyzes a mechanistically unusual reaction, the ATP-dependent insertion of CO2 between the N7 and N8 nitrogen atoms of 7,8-diaminopelargonic acid (DAPA, also called 7,8-diammoniononanoate) to form a ureido ring. This chain is ATP-dependent dethiobiotin synthetase BioD, found in Nitrosopumilus maritimus (strain SCM1).